Here is a 722-residue protein sequence, read N- to C-terminus: Bifunctional UDP-N-acetylglucosamine 2-epimerase/N-acetylmannosamine kinase (722 aa).

Positions 19, 23, 113, 220, and 253 each coordinate UDP. CMP-N-acetyl-beta-neuraminate is bound by residues Lys259, Glu271, Lys280, and His281. Residues Val282, Ser301, Ser302, Glu307, and Arg321 each coordinate UDP. The segment at 406–722 (TLSALAVDLG…VLDYTTRRIY (317 aa)) is N-acetylmannosamine kinase. A Mg(2+)-binding site is contributed by Asp413. Residue Gly416 coordinates an N-acyl-D-mannosamine 6-phosphate. Thr417, Asn418, and Arg420 together coordinate ADP. An N-acyl-D-mannosamine 6-phosphate contacts are provided by Gly476, Arg477, Thr489, Asn516, Asp517, and Gly545. 5 residues coordinate an N-acyl-D-mannosamine: Gly476, Arg477, Thr489, Asn516, and Asp517. Residue Asp517 is part of the active site. An N-acyl-D-mannosamine-binding residues include Glu566 and His569. Position 569 (His569) interacts with an N-acyl-D-mannosamine 6-phosphate. Zn(2+) is bound by residues His569, Cys579, Cys581, and Cys586. An N-acyl-D-mannosamine 6-phosphate is bound at residue Glu588. Glu588 provides a ligand contact to an N-acyl-D-mannosamine.

It in the N-terminal section; belongs to the UDP-N-acetylglucosamine 2-epimerase family. This sequence in the C-terminal section; belongs to the ROK (NagC/XylR) family. Homodimer. Homotetramer. Homohexamer. The hexameric form exhibits both enzyme activities, whereas the dimeric form only catalyzes the phosphorylation of N-acyl-D-mannosamine. In terms of processing, phosphorylated. Phosphorylation by PKC activates the UDP-N-acetylglucosamine 2-epimerase activity. As to expression, highest expression in liver and placenta. Also found in heart, brain, lung, kidney, skeletal muscle and pancreas. Isoform 1 is expressed in heart, brain, kidney, liver, placenta, lung, spleen, pancreas, skeletal muscle and colon. Isoform 2 is expressed mainly in placenta, but also in brain, kidney, liver, lung, pancreas and colon. Isoform 3 is expressed at low level in kidney, liver, placenta and colon.

The protein resides in the cytoplasm. The protein localises to the cytosol. The enzyme catalyses UDP-N-acetyl-alpha-D-glucosamine + H2O = aldehydo-N-acetyl-D-mannosamine + UDP + H(+). The catalysed reaction is an N-acyl-D-mannosamine + ATP = an N-acyl-D-mannosamine 6-phosphate + ADP + H(+). It participates in amino-sugar metabolism; N-acetylneuraminate biosynthesis. With respect to regulation, the UDP-N-acetylglucosamine 2-epimerase activity, in contrast to the N-acetylmannosamine kinase activity, exhibits allosteric regulation by cytidine monophosphate-N-acetylneuraminic acid (CMP-Neu5Ac), the end product of neuraminic acid biosynthesis. Moreover, the activity is contingent upon the oligomeric state of the enzyme. The monomeric form is inactive, while the dimeric form selectively catalyzes the phosphorylation of N-acetylmannosamine. The hexameric form, on the other hand, demonstrates full proficiency in both enzyme activities. Furthermore, the UDP-N-acetylglucosamine 2-epimerase activity is increased by PKC-mediated phosphorylation. In terms of biological role, bifunctional enzyme that possesses both UDP-N-acetylglucosamine 2-epimerase and N-acetylmannosamine kinase activities, and serves as the initiator of the biosynthetic pathway leading to the production of N-acetylneuraminic acid (NeuAc), a critical precursor in the synthesis of sialic acids. By catalyzing this pivotal and rate-limiting step in sialic acid biosynthesis, this enzyme assumes a pivotal role in governing the regulation of cell surface sialylation, playing a role in embryonic angiogenesis. Sialic acids represent a category of negatively charged sugars that reside on the surface of cells as terminal components of glycoconjugates and mediate important functions in various cellular processes, including cell adhesion, signal transduction, and cellular recognition. The sequence is that of Bifunctional UDP-N-acetylglucosamine 2-epimerase/N-acetylmannosamine kinase from Homo sapiens (Human).